A 202-amino-acid chain; its full sequence is Xanthine phosphoribosyltransferase (202 aa).

Leu-20 and Asn-27 together coordinate xanthine. Residue Ala-128 to Thr-132 coordinates 5-phospho-alpha-D-ribose 1-diphosphate. Lys-156 serves as a coordination point for xanthine.

Belongs to the purine/pyrimidine phosphoribosyltransferase family. Xpt subfamily. In terms of assembly, homodimer.

It is found in the cytoplasm. The enzyme catalyses XMP + diphosphate = xanthine + 5-phospho-alpha-D-ribose 1-diphosphate. It functions in the pathway purine metabolism; XMP biosynthesis via salvage pathway; XMP from xanthine: step 1/1. In terms of biological role, converts the preformed base xanthine, a product of nucleic acid breakdown, to xanthosine 5'-monophosphate (XMP), so it can be reused for RNA or DNA synthesis. The chain is Xanthine phosphoribosyltransferase from Deinococcus geothermalis (strain DSM 11300 / CIP 105573 / AG-3a).